We begin with the raw amino-acid sequence, 141 residues long: Hemoglobin subunit alpha-D (141 aa).

The Globin domain maps to 1 to 141 (MLTAEDKKLI…VAAVLAEKYR (141 aa)). Heme b contacts are provided by histidine 58 and histidine 87.

Heterotetramer of two alpha-D chains and two beta chains. As to expression, red blood cells.

Involved in oxygen transport from the lung to the various peripheral tissues. The polypeptide is Hemoglobin subunit alpha-D (HBAD) (Aythya fuligula (Tufted duck)).